The primary structure comprises 320 residues: Malate dehydrogenase (320 aa).

NAD(+) is bound by residues 10–15 (GAGQIG) and D34. R83 and R89 together coordinate substrate. NAD(+) is bound by residues N96 and 119 to 121 (ITN). Substrate contacts are provided by N121 and R152. H176 functions as the Proton acceptor in the catalytic mechanism.

Belongs to the LDH/MDH superfamily. MDH type 3 family.

The catalysed reaction is (S)-malate + NAD(+) = oxaloacetate + NADH + H(+). In terms of biological role, catalyzes the reversible oxidation of malate to oxaloacetate. The polypeptide is Malate dehydrogenase (Cereibacter sphaeroides (strain ATCC 17029 / ATH 2.4.9) (Rhodobacter sphaeroides)).